The chain runs to 428 residues: 3-phosphoshikimate 1-carboxyvinyltransferase (428 aa).

3-phosphoshikimate is bound by residues K21, S22, and R26. K21 contributes to the phosphoenolpyruvate binding site. Residues G91 and R119 each coordinate phosphoenolpyruvate. 3-phosphoshikimate is bound by residues S164, Q166, D313, and K340. Q166 is a phosphoenolpyruvate binding site. The active-site Proton acceptor is the D313. 2 residues coordinate phosphoenolpyruvate: R344 and R386.

The protein belongs to the EPSP synthase family. Monomer.

Its subcellular location is the cytoplasm. The enzyme catalyses 3-phosphoshikimate + phosphoenolpyruvate = 5-O-(1-carboxyvinyl)-3-phosphoshikimate + phosphate. It participates in metabolic intermediate biosynthesis; chorismate biosynthesis; chorismate from D-erythrose 4-phosphate and phosphoenolpyruvate: step 6/7. Catalyzes the transfer of the enolpyruvyl moiety of phosphoenolpyruvate (PEP) to the 5-hydroxyl of shikimate-3-phosphate (S3P) to produce enolpyruvyl shikimate-3-phosphate and inorganic phosphate. This Campylobacter jejuni subsp. jejuni serotype O:6 (strain 81116 / NCTC 11828) protein is 3-phosphoshikimate 1-carboxyvinyltransferase.